Here is a 92-residue protein sequence, read N- to C-terminus: Acylphosphatase (92 aa).

One can recognise an Acylphosphatase-like domain in the interval 5–90 (TYRLVICGLV…GDFVGFQLRE (86 aa)). Active-site residues include Arg20 and Asn38.

Belongs to the acylphosphatase family.

The catalysed reaction is an acyl phosphate + H2O = a carboxylate + phosphate + H(+). The polypeptide is Acylphosphatase (acyP) (Albidiferax ferrireducens (strain ATCC BAA-621 / DSM 15236 / T118) (Rhodoferax ferrireducens)).